Reading from the N-terminus, the 714-residue chain is Structure-specific endonuclease subunit SLX4 2 (714 aa).

Composition is skewed to basic and acidic residues over residues 1 to 14 (MSPE…EDNL) and 24 to 34 (IHEETLAEESH). Disordered regions lie at residues 1–114 (MSPE…EQQG) and 338–369 (SSGP…KTPQ). Over residues 36-46 (QAIQRSISRLS) the composition is skewed to polar residues. Residues 79-92 (KTKKRKLKVSKPRK) show a composition bias toward basic residues.

Belongs to the SLX4 family. Forms a heterodimer with SLX1. In terms of processing, phosphorylated in response to DNA damage.

The protein localises to the nucleus. In terms of biological role, regulatory subunit of the SLX1-SLX4 structure-specific endonuclease that resolves DNA secondary structures generated during DNA repair and recombination. Has endonuclease activity towards branched DNA substrates, introducing single-strand cuts in duplex DNA close to junctions with ss-DNA. The protein is Structure-specific endonuclease subunit SLX4 2 of Candida tropicalis (strain ATCC MYA-3404 / T1) (Yeast).